The following is a 102-amino-acid chain: Large ribosomal subunit protein bL21 (102 aa).

Belongs to the bacterial ribosomal protein bL21 family. In terms of assembly, part of the 50S ribosomal subunit. Contacts protein L20.

Its function is as follows. This protein binds to 23S rRNA in the presence of protein L20. The chain is Large ribosomal subunit protein bL21 from Staphylococcus haemolyticus (strain JCSC1435).